The chain runs to 1082 residues: RNA-directed RNA polymerase (1082 aa).

One can recognise a RdRp catalytic domain in the interval 498–670 (LSYGDVTRYL…ALASLTGCEI (173 aa)).

Belongs to the reoviridae RNA-directed RNA polymerase family. In terms of assembly, interacts with VP3 (Potential). Interacts with VP2; this interaction activates VP1. Interacts with NSP5; this interaction is probably necessary for the formation of functional virus factories. Interacts with NSP2; this interaction is weak. Mg(2+) is required as a cofactor.

It localises to the virion. The catalysed reaction is RNA(n) + a ribonucleoside 5'-triphosphate = RNA(n+1) + diphosphate. Functionally, RNA-directed RNA polymerase that is involved in both transcription and genome replication. Together with VP3 capping enzyme, forms an enzyme complex positioned near the channels situated at each of the five-fold vertices of the core. Following infection, the outermost layer of the virus is lost, leaving a double-layered particle (DLP) made up of the core and VP6 shell. VP1 then catalyzes the transcription of fully conservative plus-strand genomic RNAs that are extruded through the DLP's channels into the cytoplasm where they function as mRNAs for translation of viral proteins. One copy of each of the viral (+)RNAs is also recruited during core assembly, together with newly synthesized polymerase complexes and VP2. The polymerase of these novo-formed particles catalyzes the synthesis of complementary minus-strands leading to dsDNA formation. To do so, the polymerase specifically recognizes conserved 3' sequence(s) in plus-strand RNA templates. Once dsRNA synthesis is complete, the polymerase switches to the transcriptional mode, thus providing secondary transcription. The polypeptide is RNA-directed RNA polymerase (Rotavirus C (strain RVC/Pig/United States/Cowden/1980) (RV-C)).